The following is a 158-amino-acid chain: C-type lectin lectoxin-Enh5 (158 aa).

The N-terminal stretch at 1–23 (MGQFTVVSLGLLAVFLSLSGAKG) is a signal peptide. 3 disulfides stabilise this stretch: Cys26-Cys37, Cys54-Cys154, and Cys129-Cys146. The C-type lectin domain maps to 33–155 (RNGVCNKLFP…CASLHPFICQ (123 aa)). Positions 119–121 (EPN) match the Mannose-binding motif. Glu127, Asn142, and Asp143 together coordinate Ca(2+).

This sequence belongs to the true venom lectin family. In terms of tissue distribution, expressed by the venom gland.

The protein localises to the secreted. Mannose-binding lectin which recognizes specific carbohydrate structures and agglutinates a variety of animal cells by binding to cell-surface glycoproteins and glycolipids. May be a calcium-dependent lectin. This Pseudoferania polylepis (Macleay's water snake) protein is C-type lectin lectoxin-Enh5.